The chain runs to 416 residues: Imidazolonepropionase (416 aa).

Residues H82 and H84 each contribute to the Fe(3+) site. Residues H82 and H84 each contribute to the Zn(2+) site. Residues R91, Y154, and H187 each coordinate 4-imidazolone-5-propanoate. Y154 serves as a coordination point for N-formimidoyl-L-glutamate. Position 252 (H252) interacts with Fe(3+). H252 is a Zn(2+) binding site. A 4-imidazolone-5-propanoate-binding site is contributed by E255. D326 contacts Fe(3+). D326 serves as a coordination point for Zn(2+). N-formimidoyl-L-glutamate-binding residues include N328 and G330. Residue S331 coordinates 4-imidazolone-5-propanoate.

Belongs to the metallo-dependent hydrolases superfamily. HutI family. It depends on Zn(2+) as a cofactor. Fe(3+) serves as cofactor.

The protein localises to the cytoplasm. The enzyme catalyses 4-imidazolone-5-propanoate + H2O = N-formimidoyl-L-glutamate. It functions in the pathway amino-acid degradation; L-histidine degradation into L-glutamate; N-formimidoyl-L-glutamate from L-histidine: step 3/3. Functionally, catalyzes the hydrolytic cleavage of the carbon-nitrogen bond in imidazolone-5-propanoate to yield N-formimidoyl-L-glutamate. It is the third step in the universal histidine degradation pathway. This chain is Imidazolonepropionase, found in Parabacteroides distasonis (strain ATCC 8503 / DSM 20701 / CIP 104284 / JCM 5825 / NCTC 11152).